A 287-amino-acid chain; its full sequence is Cyclopropane mycolic acid synthase 1 (287 aa).

S-adenosyl-L-methionine contacts are provided by residues 33–34, 68–76, 94–99, and 123–124; these read YS, LLDVGCGWG, TLSKNQ, and WE. Cysteine 269 is an active-site residue.

It belongs to the CFA/CMAS family. In terms of assembly, homodimer.

Its subcellular location is the cytoplasm. The catalysed reaction is a 1-acyl-2-(9Z)-enoyl-sn-glycero-3-phospholipid + S-adenosyl-L-methionine = a 1-acyl-2-(9-cyclopronane)-acyl-sn-glycero-3-phospholipid + S-adenosyl-L-homocysteine + H(+). It functions in the pathway lipid metabolism; mycolic acid biosynthesis. In terms of biological role, catalyzes the conversion of a double bond to a cyclopropane ring at the distal position of an alpha mycolic acid via the transfer of a methylene group from S-adenosyl-L-methionine. Cyclopropanated mycolic acids are key factors participating in cell envelope permeability, host immunomodulation and persistence. This chain is Cyclopropane mycolic acid synthase 1 (cmaA1), found in Mycobacterium tuberculosis (strain CDC 1551 / Oshkosh).